The primary structure comprises 97 residues: MKRICSIYRSPKRNEMYLYVLKSDVLKRVPPELLVAFGKPVHAFDLVLSPERALSREDINVVLENLDSQGYHLQMPPAEDDYIEHLPEELLRRNDPM.

The region spanning 3 to 87 (RICSIYRSPK…AEDDYIEHLP (85 aa)) is the YcgL domain.

In Pseudomonas savastanoi pv. phaseolicola (strain 1448A / Race 6) (Pseudomonas syringae pv. phaseolicola (strain 1448A / Race 6)), this protein is YcgL domain-containing protein PSPPH_1548.